The primary structure comprises 137 residues: MPVIQWSEALHLGDAATDANHAAFCTLLNAVADASEADFVSALDAFIAHTEVHFAEENAWMEAADFPPLHCHRNEHDNVLALCREVRRRAADGDMALGRRLVTELPEWFAQHVDVMDRMMTTWLAQRGPDAREEAAA.

Residues His21, His53, Glu57, His72, His76, His112, and Asp117 each contribute to the Fe cation site.

This sequence belongs to the hemerythrin family. Monomer.

Functionally, oxygen-binding protein. May be involved in a storage mechanism or for delivery to oxygen-requiring enzymes. The oxygen-binding site contains two iron atoms. The protein is Bacteriohemerythrin of Ralstonia nicotianae (strain ATCC BAA-1114 / GMI1000) (Ralstonia solanacearum).